Reading from the N-terminus, the 312-residue chain is Aspartate carbamoyltransferase catalytic subunit (312 aa).

Residues R58 and T59 each coordinate carbamoyl phosphate. Residue K86 coordinates L-aspartate. R108, H136, and Q139 together coordinate carbamoyl phosphate. Positions 169 and 223 each coordinate L-aspartate. Residues G264 and P265 each coordinate carbamoyl phosphate.

The protein belongs to the aspartate/ornithine carbamoyltransferase superfamily. ATCase family. In terms of assembly, heterododecamer (2C3:3R2) of six catalytic PyrB chains organized as two trimers (C3), and six regulatory PyrI chains organized as three dimers (R2).

It catalyses the reaction carbamoyl phosphate + L-aspartate = N-carbamoyl-L-aspartate + phosphate + H(+). It functions in the pathway pyrimidine metabolism; UMP biosynthesis via de novo pathway; (S)-dihydroorotate from bicarbonate: step 2/3. In terms of biological role, catalyzes the condensation of carbamoyl phosphate and aspartate to form carbamoyl aspartate and inorganic phosphate, the committed step in the de novo pyrimidine nucleotide biosynthesis pathway. In Endomicrobium trichonymphae, this protein is Aspartate carbamoyltransferase catalytic subunit.